The sequence spans 130 residues: Protein ApaG (130 aa).

The ApaG domain occupies 3–127 (RALTRDIEVT…FSLDSPGLMR (125 aa)).

The sequence is that of Protein ApaG from Agrobacterium fabrum (strain C58 / ATCC 33970) (Agrobacterium tumefaciens (strain C58)).